The following is a 469-amino-acid chain: 3-isopropylmalate dehydratase large subunit (469 aa).

C349, C409, and C412 together coordinate [4Fe-4S] cluster.

The protein belongs to the aconitase/IPM isomerase family. LeuC type 1 subfamily. Heterodimer of LeuC and LeuD. Requires [4Fe-4S] cluster as cofactor.

It catalyses the reaction (2R,3S)-3-isopropylmalate = (2S)-2-isopropylmalate. The protein operates within amino-acid biosynthesis; L-leucine biosynthesis; L-leucine from 3-methyl-2-oxobutanoate: step 2/4. Functionally, catalyzes the isomerization between 2-isopropylmalate and 3-isopropylmalate, via the formation of 2-isopropylmaleate. The protein is 3-isopropylmalate dehydratase large subunit of Methylorubrum extorquens (strain CM4 / NCIMB 13688) (Methylobacterium extorquens).